Here is a 134-residue protein sequence, read N- to C-terminus: Interleukin-5 (134 aa).

The signal sequence occupies residues 1 to 19 (MRMLLHLSLLALGAAYVSA). 2 N-linked (GlcNAc...) asparagine glycosylation sites follow: N76 and N90.

This sequence belongs to the IL-5 family. In terms of assembly, homodimer; disulfide-linked. Interacts with IL5RA. Interacts with CSF2RB.

The protein localises to the secreted. Homodimeric cytokine expressed predominantly by T-lymphocytes and NK cells that plays an important role in the survival, differentiation, and chemotaxis of eosinophils. Also acts on activated and resting B-cells to induce immunoglobulin production, growth, and differentiation. Mechanistically, exerts its biological effects through a receptor composed of IL5RA subunit and the cytokine receptor common subunit beta/CSF2RB. Binding to the receptor leads to activation of various kinases including LYN, SYK and JAK2 and thereby propagates signals through the RAS-MAPK and JAK-STAT5 pathways respectively. The protein is Interleukin-5 (IL5) of Felis catus (Cat).